Reading from the N-terminus, the 313-residue chain is METANYTKVTEFVLTGLSQTPEVQLVLFVIFLSFYLFILPGNILIICTISLDPHLTSPMYFLLANLAFLDIWYSSITAPEMLIDFFVERKIISFDGCIAQLFFLHFAGASEMFLLTVMAFDLYTAICRPLHYATIMNQRLCCILVALSWRGGFIHSIIQVALIVRLPFCGPNELDSYFCDITQVVRIACANTFPEELVMICSSGLISVVCLIALLMSYAFLLALFKKLSGSGENTNRAMSTCYSHITIVVLMFGPSIYIYARPFDSFSLDKVVSVFNTLIFPLRNPIIYTLRNKEVKAAMRKLVTKYILCKEK.

Residues M1–L25 are Extracellular-facing. Residue N5 is glycosylated (N-linked (GlcNAc...) asparagine). Residues V26 to I49 traverse the membrane as a helical segment. Over S50–S57 the chain is Cytoplasmic. A helical membrane pass occupies residues P58–P79. The Extracellular portion of the chain corresponds to E80 to Q100. C97 and C189 are disulfide-bonded. The helical transmembrane segment at L101–F120 threads the bilayer. The Cytoplasmic segment spans residues D121–R139. The helical transmembrane segment at L140–I158 threads the bilayer. Topologically, residues Q159–E195 are extracellular. A helical membrane pass occupies residues E196–A219. At F220–R237 the chain is on the cytoplasmic side. A helical transmembrane segment spans residues A238–Y260. Over A261–K271 the chain is Extracellular. The chain crosses the membrane as a helical span at residues V272–L291. The Cytoplasmic segment spans residues R292–K313.

The protein belongs to the G-protein coupled receptor 1 family.

The protein resides in the cell membrane. Its function is as follows. Odorant receptor. This chain is Olfactory receptor 4M2 (OR4M2), found in Homo sapiens (Human).